The following is a 608-amino-acid chain: Coilin (608 aa).

The segment at 134 to 272 (KETGGYESES…RKKAKRQWLR (139 aa)) is disordered. The span at 141–155 (SESEEDELEEEAEEF) shows a compositional bias: acidic residues. Positions 161 to 179 (ASKKRKTSSKNQSTKRKKC) are enriched in basic residues. Positions 163-170 (KKRKTSSK) match the Nuclear localization signal 1 motif. Serine 187 carries the post-translational modification Phosphoserine. A compositionally biased stretch (polar residues) spans 211 to 228 (DVQSANNDEQNNDSTKPM). The segment covering 235-245 (SQQEESKEHND) has biased composition (basic and acidic residues). A Nuclear localization signal 2 motif is present at residues 253–260 (TKKTPSRS). Basic residues predominate over residues 256–269 (TPSRSARRKKAKRQ). A Tudor; atypical domain is found at 410 to 510 (YEQLVAYTGS…LLDVRSVKTS (101 aa)). Residues 513–585 (DSAEVAKSAL…KKGSSSGGSW (73 aa)) form a disordered region. Residues 558–585 (EALSAKKAALSQANNGWNKKGSSSGGSW) show a composition bias toward low complexity.

Belongs to the coilin family. As to quaternary structure, homooligomer. Interaction with RNA results in multimerization due to structural alteration in the NOD domain.

Its subcellular location is the nucleus. The protein resides in the cajal body. Its function is as follows. Probable component of nuclear coiled bodies, also known as Cajal bodies or CBs, which are involved in the modification and assembly of nucleoplasmic snRNPs. Required for CBs formation. Binds snRNAs and non-specific artificial RNA via the N-terminal part of the NOD domain and via the NLS2 region (212-282) of the IDD domain. The two sites are able to function independently and provide effective RNA-binding in a non-cooperative manner. This Arabidopsis thaliana (Mouse-ear cress) protein is Coilin.